Consider the following 87-residue polypeptide: MARPAGHAASQAGGTAAADARQMRLVAAVIAVTMALWLGVQWLGGQQDWPAKYAFLADLAAIGALIWSLLVTFRIWRRRKASSQGQG.

2 consecutive transmembrane segments (helical) span residues 25–45 (LVAAVIAVTMALWLGVQWLGG) and 53–73 (YAFLADLAAIGALIWSLLVTF).

It localises to the cell membrane. This is an uncharacterized protein from Paracoccus denitrificans.